A 335-amino-acid polypeptide reads, in one-letter code: S-adenosylmethionine:tRNA ribosyltransferase-isomerase (335 aa).

The protein belongs to the QueA family. In terms of assembly, monomer.

Its subcellular location is the cytoplasm. The catalysed reaction is 7-aminomethyl-7-carbaguanosine(34) in tRNA + S-adenosyl-L-methionine = epoxyqueuosine(34) in tRNA + adenine + L-methionine + 2 H(+). It participates in tRNA modification; tRNA-queuosine biosynthesis. Its function is as follows. Transfers and isomerizes the ribose moiety from AdoMet to the 7-aminomethyl group of 7-deazaguanine (preQ1-tRNA) to give epoxyqueuosine (oQ-tRNA). The chain is S-adenosylmethionine:tRNA ribosyltransferase-isomerase from Thermotoga petrophila (strain ATCC BAA-488 / DSM 13995 / JCM 10881 / RKU-1).